We begin with the raw amino-acid sequence, 115 residues long: Large ribosomal subunit protein uL22 (115 aa).

It belongs to the universal ribosomal protein uL22 family. In terms of assembly, part of the 50S ribosomal subunit.

Functionally, this protein binds specifically to 23S rRNA; its binding is stimulated by other ribosomal proteins, e.g. L4, L17, and L20. It is important during the early stages of 50S assembly. It makes multiple contacts with different domains of the 23S rRNA in the assembled 50S subunit and ribosome. The globular domain of the protein is located near the polypeptide exit tunnel on the outside of the subunit, while an extended beta-hairpin is found that lines the wall of the exit tunnel in the center of the 70S ribosome. The polypeptide is Large ribosomal subunit protein uL22 (Ligilactobacillus salivarius (strain UCC118) (Lactobacillus salivarius)).